Reading from the N-terminus, the 551-residue chain is Putative ABC transporter ATP-binding protein BT9727_3105 (551 aa).

ABC transporter domains lie at Ala-5 to Phe-243 and Leu-293 to Arg-525. Residues Gly-39–Thr-46 and Gly-327–Ser-334 each bind ATP.

It belongs to the ABC transporter superfamily.

The protein resides in the cell membrane. Its function is as follows. Probably part of an ABC transporter complex. Responsible for energy coupling to the transport system. This Bacillus thuringiensis subsp. konkukian (strain 97-27) protein is Putative ABC transporter ATP-binding protein BT9727_3105.